The primary structure comprises 118 residues: Non-specific lipid-transfer protein (118 aa).

The signal sequence occupies residues 1–27; that stretch reads MGVSKVAIAVAVMLMVVVINHPAVVEG. 4 disulfides stabilise this stretch: cysteine 30–cysteine 75, cysteine 40–cysteine 54, cysteine 55–cysteine 100, and cysteine 77–cysteine 114.

Belongs to the plant LTP family. In terms of processing, disulfide bonds.

Its function is as follows. Plant non-specific lipid-transfer proteins transfer phospholipids as well as galactolipids across membranes. May play a role in wax or cutin deposition in the cell walls of expanding epidermal cells and certain secretory tissues. This chain is Non-specific lipid-transfer protein, found in Apium graveolens (Celery).